The following is a 260-amino-acid chain: Vaa serine proteinase homolog 1 (260 aa).

The N-terminal stretch at 1-18 is a signal peptide; that stretch reads MVLIRVLANLLVLQLSYA. Residues 19 to 24 constitute a propeptide that is removed on maturation; it reads QKSSEL. Residues 25 to 251 form the Peptidase S1 domain; it reads VIGGDECNIN…YTDWIQSIIA (227 aa). Intrachain disulfides connect cysteine 31-cysteine 165, cysteine 52-cysteine 68, cysteine 100-cysteine 258, cysteine 144-cysteine 212, cysteine 176-cysteine 191, and cysteine 202-cysteine 227. N-linked (GlcNAc...) asparagine glycosylation occurs at asparagine 123. The tract at residues 172-186 is key residues for binding to FVIIIa; the sequence is DYSVCQKVYRKLPEK. Asparagine 253 is a glycosylation site (N-linked (GlcNAc...) asparagine).

The protein belongs to the peptidase S1 family. Snake venom subfamily. N-glycosylated. The toxin exists in multiple glycoforms. As to expression, expressed by the venom gland.

It is found in the secreted. In terms of biological role, this is the first member of the serine protease family that has strong anticoagulant activity and lacks enzymatic activity. It inhibits activities of three blood coagulation complexes: (1) prothrombinase complex (composed of blood coagulation factors Va and Xa (F5 and F10)) (IC(50)=164.1 nM), (2) intrinsic tenase complex (composed of factors VIIIa and IXa (F8 and F9)), and (3) extrinsic tenase complex (composed of tissue factor and factor VIIa (F7)). The toxin also has been observed to bind prothrombin, factor FVa, non-activated and activated forms of factors FVII (F7) (FVII and FVIIa), factor FVIIIa (F8), factors FIX and FIXa (F9) and factors FX and FXa (F10). The toxin inhibits the activity of the intrinsic tenase complex mainly by competing with FIXa (F9) for binding to FVIIIa (F8). The chain is Vaa serine proteinase homolog 1 from Vipera ammodytes ammodytes (Western sand viper).